The primary structure comprises 347 residues: MTDLPFVTADLPGSGGALRRAPEDFRVDEVPAYLPSGAGPHLYLRVEKRGRTTRDALRELARALGVPERDAGAAGLKDKDAVTTQWLSFPVARDPDPAALAAPGLRVLEVSRHQNKLRTGHVRANRFTLAVRGGDLARARDCAAALAARGLPNFFGPQRFGAAGRNAAVGRALVTGERSPEAGRAARDRFLRRLSLSAYQSLLFNRWLAERMADGRFAAALAGDVMKKLDTGGLFTCEDPATDGPRVERFEISPAGPMFGHALRLAGGEAGAREARLLEAEGIALADFVRGGGEAEGTRRAARLRIDVALEPLEDGYRAAFELPRGAYATVVMRELTKADAELPEED.

The Nucleophile role is filled by Asp78. The TRUD domain occupies 150–304; it reads GLPNFFGPQR…AEGTRRAARL (155 aa).

This sequence belongs to the pseudouridine synthase TruD family.

It catalyses the reaction uridine(13) in tRNA = pseudouridine(13) in tRNA. Responsible for synthesis of pseudouridine from uracil-13 in transfer RNAs. This is tRNA pseudouridine synthase D from Anaeromyxobacter dehalogenans (strain 2CP-C).